The chain runs to 289 residues: Phosphatidylserine decarboxylase proenzyme (289 aa).

Residues D92, H149, and S254 each act as charge relay system; for autoendoproteolytic cleavage activity in the active site. S254 serves as the catalytic Schiff-base intermediate with substrate; via pyruvic acid; for decarboxylase activity. The residue at position 254 (S254) is a Pyruvic acid (Ser); by autocatalysis.

This sequence belongs to the phosphatidylserine decarboxylase family. PSD-B subfamily. Prokaryotic type I sub-subfamily. Heterodimer of a large membrane-associated beta subunit and a small pyruvoyl-containing alpha subunit. Requires pyruvate as cofactor. Post-translationally, is synthesized initially as an inactive proenzyme. Formation of the active enzyme involves a self-maturation process in which the active site pyruvoyl group is generated from an internal serine residue via an autocatalytic post-translational modification. Two non-identical subunits are generated from the proenzyme in this reaction, and the pyruvate is formed at the N-terminus of the alpha chain, which is derived from the carboxyl end of the proenzyme. The autoendoproteolytic cleavage occurs by a canonical serine protease mechanism, in which the side chain hydroxyl group of the serine supplies its oxygen atom to form the C-terminus of the beta chain, while the remainder of the serine residue undergoes an oxidative deamination to produce ammonia and the pyruvoyl prosthetic group on the alpha chain. During this reaction, the Ser that is part of the protease active site of the proenzyme becomes the pyruvoyl prosthetic group, which constitutes an essential element of the active site of the mature decarboxylase.

The protein resides in the cell membrane. The catalysed reaction is a 1,2-diacyl-sn-glycero-3-phospho-L-serine + H(+) = a 1,2-diacyl-sn-glycero-3-phosphoethanolamine + CO2. It functions in the pathway phospholipid metabolism; phosphatidylethanolamine biosynthesis; phosphatidylethanolamine from CDP-diacylglycerol: step 2/2. Catalyzes the formation of phosphatidylethanolamine (PtdEtn) from phosphatidylserine (PtdSer). The polypeptide is Phosphatidylserine decarboxylase proenzyme (Pseudomonas aeruginosa (strain ATCC 15692 / DSM 22644 / CIP 104116 / JCM 14847 / LMG 12228 / 1C / PRS 101 / PAO1)).